The following is a 220-amino-acid chain: uncharacterized protein (220 aa).

4 helical membrane passes run leucine 61–glycine 81, serine 85–phenylalanine 105, phenylalanine 115–leucine 135, and leucine 150–leucine 170.

The protein localises to the membrane. This is an uncharacterized protein from Caenorhabditis elegans.